Reading from the N-terminus, the 213-residue chain is Protein ORF D (213 aa).

This Elephas maximus (Indian elephant) protein is Protein ORF D.